Consider the following 287-residue polypeptide: Cysteine-rich repeat secretory protein 58 (287 aa).

Positions 1–20 are cleaved as a signal peptide; the sequence is METTKKLFALLCLFVTMNQA. The Extracellular segment spans residues 21–267; that stretch reads ISVSDPDDME…GSFSHRGNNK (247 aa). 2 consecutive Gnk2-homologous domains span residues 28–130 and 135–246; these read DMET…DKFF and ETNP…TYNS. N-linked (GlcNAc...) asparagine glycans are attached at residues asparagine 39, asparagine 43, asparagine 59, asparagine 68, asparagine 89, asparagine 99, asparagine 107, asparagine 208, and asparagine 245. The chain crosses the membrane as a helical span at residues 268-286; it reads LLGGMVLAVSVSVFAFLSL. Valine 287 is a topological domain (cytoplasmic).

This sequence belongs to the cysteine-rich repeat secretory protein family.

It is found in the membrane. The sequence is that of Cysteine-rich repeat secretory protein 58 (CRRSP58) from Arabidopsis thaliana (Mouse-ear cress).